The chain runs to 203 residues: Thymidine kinase (203 aa).

Residues 21 to 28 (GCMFAGKT) and 99 to 102 (DEIQ) contribute to the ATP site. Glu-100 acts as the Proton acceptor in catalysis. Zn(2+)-binding residues include Cys-156, Cys-159, Cys-194, and Cys-197.

It belongs to the thymidine kinase family. In terms of assembly, homotetramer.

The protein resides in the cytoplasm. The catalysed reaction is thymidine + ATP = dTMP + ADP + H(+). The chain is Thymidine kinase from Mesoplasma florum (strain ATCC 33453 / NBRC 100688 / NCTC 11704 / L1) (Acholeplasma florum).